The primary structure comprises 304 residues: ADP-ribosyl cyclase/cyclic ADP-ribose hydrolase 1 (304 aa).

Residues 1–21 lie on the Cytoplasmic side of the membrane; it reads MANYEFSQVSGDRPGCRLSRK. Residues 22-44 traverse the membrane as a helical; Signal-anchor for type II membrane protein segment; sequence AQIGLGVGLLVLIALVVGIVVIL. Residues 45–304 are Extracellular-facing; sequence LRPRSLLVWT…PEHPSCRLNT (260 aa). 3 disulfides stabilise this stretch: Cys70-Cys86, Cys103-Cys184, and Cys164-Cys177. N-linked (GlcNAc...) asparagine glycosylation occurs at Asn104. The active site involves Cys123. Asn124 carries an N-linked (GlcNAc...) asparagine glycan. Cys205 is an active-site residue. 2 N-linked (GlcNAc...) asparagine glycosylation sites follow: Asn213 and Asn223. 2 disulfide bridges follow: Cys258-Cys279 and Cys291-Cys300.

Belongs to the ADP-ribosyl cyclase family. In terms of assembly, homodimer.

The protein resides in the membrane. It catalyses the reaction NAD(+) = cyclic ADP-beta-D-ribose + nicotinamide + H(+). The catalysed reaction is nicotinate + NADP(+) = nicotinate-adenine dinucleotide phosphate + nicotinamide. It carries out the reaction NAD(+) + H2O = ADP-D-ribose + nicotinamide + H(+). In terms of biological role, synthesizes the second messengers cyclic ADP-ribose (cADPR) and nicotinate-adenine dinucleotide phosphate (NAADP), the former a second messenger for glucose-induced insulin secretion, the latter a Ca(2+) mobilizer. Also has cADPR hydrolase activity. This is ADP-ribosyl cyclase/cyclic ADP-ribose hydrolase 1 (Cd38) from Mus musculus (Mouse).